Here is a 505-residue protein sequence, read N- to C-terminus: N-succinylglutamate 5-semialdehyde dehydrogenase (505 aa).

234 to 239 contributes to the NAD(+) binding site; that stretch reads GSAHTG. Catalysis depends on residues Glu257 and Cys291.

The protein belongs to the aldehyde dehydrogenase family. AstD subfamily.

The enzyme catalyses N-succinyl-L-glutamate 5-semialdehyde + NAD(+) + H2O = N-succinyl-L-glutamate + NADH + 2 H(+). The protein operates within amino-acid degradation; L-arginine degradation via AST pathway; L-glutamate and succinate from L-arginine: step 4/5. In terms of biological role, catalyzes the NAD-dependent reduction of succinylglutamate semialdehyde into succinylglutamate. This Yersinia pseudotuberculosis serotype IB (strain PB1/+) protein is N-succinylglutamate 5-semialdehyde dehydrogenase.